Reading from the N-terminus, the 211-residue chain is Protein YCF54, chloroplastic (211 aa).

The transit peptide at 1–80 (MWSVTGALTV…GESTKYHFLV (80 aa)) directs the protein to the chloroplast.

Belongs to the ycf54 family. Interacts with LFNR1 and CRD1/CHL27 in chloroplasts.

It is found in the plastid. The protein resides in the chloroplast. In terms of biological role, involved in the biosynthesis of chlorophyll; acts probably as a scaffolding factor in the MgProto monomethylester (MgProtoME) cyclase complex to stabilize CRD1/CHL27, the catalytic subunit which catalyzes the formation of a fifth isocyclic ring to tetrapyrroles to form protochlorophyllide. In Arabidopsis thaliana (Mouse-ear cress), this protein is Protein YCF54, chloroplastic.